Reading from the N-terminus, the 441-residue chain is Damage-control phosphatase ARMT1 (441 aa).

N-acetylalanine is present on Ala-2. Lys-40 carries the N6-acetyllysine modification. Ser-102 carries the phosphoserine modification. Residues Asp-253 and Asn-254 each contribute to the Mn(2+) site. A substrate-binding site is contributed by 253–254 (DN). Residues Glu-258 and Asp-291 each contribute to the S-adenosyl-L-methionine site. Asp-291 is a binding site for Mn(2+). Residues 367–371 (DLNYR) and Lys-404 contribute to the substrate site. The short motif at 401–404 (RTLK) is the Subfamily III RTxK motif element.

Belongs to the damage-control phosphatase family. Sugar phosphate phosphatase III subfamily. Requires Mn(2+) as cofactor. Ni(2+) serves as cofactor. In terms of processing, automethylated.

It carries out the reaction beta-D-fructose 1-phosphate + H2O = D-fructose + phosphate. The catalysed reaction is beta-D-fructose 6-phosphate = dihydroxyacetone + D-glyceraldehyde 3-phosphate. It catalyses the reaction L-glutamyl-[protein] + S-adenosyl-L-methionine = [protein]-L-glutamate 5-O-methyl ester + S-adenosyl-L-homocysteine. In terms of biological role, metal-dependent phosphatase that shows phosphatase activity against several substrates, including fructose-1-phosphate and fructose-6-phosphate. Its preference for fructose-1-phosphate, a strong glycating agent that causes DNA damage rather than a canonical yeast metabolite, suggests a damage-control function in hexose phosphate metabolism. Has also been shown to have O-methyltransferase activity that methylates glutamate residues of target proteins to form gamma-glutamyl methyl ester residues. Possibly methylates PCNA, suggesting it is involved in the DNA damage response. The polypeptide is Damage-control phosphatase ARMT1 (Bos taurus (Bovine)).